Reading from the N-terminus, the 406-residue chain is Phosphopentomutase (406 aa).

Positions 10, 305, 310, 346, 347, and 358 each coordinate Mn(2+).

Belongs to the phosphopentomutase family. Mn(2+) serves as cofactor.

The protein resides in the cytoplasm. The catalysed reaction is 2-deoxy-alpha-D-ribose 1-phosphate = 2-deoxy-D-ribose 5-phosphate. It catalyses the reaction alpha-D-ribose 1-phosphate = D-ribose 5-phosphate. Its pathway is carbohydrate degradation; 2-deoxy-D-ribose 1-phosphate degradation; D-glyceraldehyde 3-phosphate and acetaldehyde from 2-deoxy-alpha-D-ribose 1-phosphate: step 1/2. Isomerase that catalyzes the conversion of deoxy-ribose 1-phosphate (dRib-1-P) and ribose 1-phosphate (Rib-1-P) to deoxy-ribose 5-phosphate (dRib-5-P) and ribose 5-phosphate (Rib-5-P), respectively. The protein is Phosphopentomutase of Sinorhizobium medicae (strain WSM419) (Ensifer medicae).